Consider the following 332-residue polypeptide: DNA-directed RNA polymerase subunit alpha (332 aa).

Positions 1–244 are alpha N-terminal domain (alpha-NTD); that stretch reads MKKHAKVYYS…AHLNLLADVE (244 aa). Residues 259–332 are alpha C-terminal domain (alpha-CTD); it reads IKEEPIRRFS…NYKNENKGEN (74 aa).

Belongs to the RNA polymerase alpha chain family. As to quaternary structure, homodimer. The RNAP catalytic core consists of 2 alpha, 1 beta, 1 beta' and 1 omega subunit. When a sigma factor is associated with the core the holoenzyme is formed, which can initiate transcription.

It catalyses the reaction RNA(n) + a ribonucleoside 5'-triphosphate = RNA(n+1) + diphosphate. Its function is as follows. DNA-dependent RNA polymerase catalyzes the transcription of DNA into RNA using the four ribonucleoside triphosphates as substrates. The protein is DNA-directed RNA polymerase subunit alpha of Mesomycoplasma hyopneumoniae (strain 7448) (Mycoplasma hyopneumoniae).